Consider the following 788-residue polypeptide: Diacylglycerol kinase gamma (788 aa).

The segment covering P83–E93 has biased composition (basic and acidic residues). The interval P83–S150 is disordered. The segment covering A95–S109 has biased composition (polar residues). EF-hand domains lie at R172 to V207 and E217 to L252. Residues D185, D187, N189, E196, D230, N232, D234, and E241 each contribute to the Ca(2+) site. 2 Phorbol-ester/DAG-type zinc fingers span residues R268 to C318 and Q333 to C380. The 135-residue stretch at P427–P561 folds into the DAGKc domain. The interval M768 to D788 is disordered.

Belongs to the eukaryotic diacylglycerol kinase family. In terms of tissue distribution, expressed specifically in brain. Highly expressed in cerebellar Purkinje cells (at protein level).

The protein resides in the membrane. It is found in the cytoplasm. It localises to the cytosol. Its subcellular location is the cytoskeleton. The catalysed reaction is a 1,2-diacyl-sn-glycerol + ATP = a 1,2-diacyl-sn-glycero-3-phosphate + ADP + H(+). It carries out the reaction 1,2-didecanoyl-sn-glycerol + ATP = 1,2-didecanoyl-sn-glycero-3-phosphate + ADP + H(+). The enzyme catalyses 1,2-di-(9Z-octadecenoyl)-sn-glycerol + ATP = 1,2-di-(9Z-octadecenoyl)-sn-glycero-3-phosphate + ADP + H(+). It catalyses the reaction 1-octadecanoyl-2-(9Z,12Z)-octadecadienoyl-sn-glycerol + ATP = 1-octadecanoyl-2-(9Z,12Z-octadecadienoyl)-sn-glycero-3-phosphate + ADP + H(+). The catalysed reaction is 1-octadecanoyl-2-(5Z,8Z,11Z,14Z-eicosatetraenoyl)-sn-glycerol + ATP = 1-octadecanoyl-2-(5Z,8Z,11Z,14Z-eicosatetraenoyl)-sn-glycero-3-phosphate + ADP + H(+). It participates in lipid metabolism; glycerolipid metabolism. The activity is calcium-dependent. Requires phosphatidylserine for maximal activity. Functionally, diacylglycerol kinase that converts diacylglycerol/DAG into phosphatidic acid/phosphatidate/PA and regulates the respective levels of these two bioactive lipids. Thereby, acts as a central switch between the signaling pathways activated by these second messengers with different cellular targets and opposite effects in numerous biological processes. Has no apparent specificity with regard to the acyl compositions of diacylglycerol. Specifically expressed in the cerebellum where it controls the level of diacylglycerol which in turn regulates the activity of protein kinase C gamma. Through protein kinase C gamma, indirectly regulates the dendritic development of Purkinje cells, cerebellar long term depression and ultimately cerebellar motor coordination. The chain is Diacylglycerol kinase gamma (Dgkg) from Rattus norvegicus (Rat).